The primary structure comprises 165 residues: Large ribosomal subunit protein uL10 (165 aa).

This sequence belongs to the universal ribosomal protein uL10 family. As to quaternary structure, part of the ribosomal stalk of the 50S ribosomal subunit. The N-terminus interacts with L11 and the large rRNA to form the base of the stalk. The C-terminus forms an elongated spine to which L12 dimers bind in a sequential fashion forming a multimeric L10(L12)X complex.

Functionally, forms part of the ribosomal stalk, playing a central role in the interaction of the ribosome with GTP-bound translation factors. This Shewanella pealeana (strain ATCC 700345 / ANG-SQ1) protein is Large ribosomal subunit protein uL10.